A 166-amino-acid chain; its full sequence is Phospholipase A2 inhibitor clone 05 (166 aa).

A signal peptide spans 1-19 (MRLILLSSLLLLGIFLADG). One can recognise a C-type lectin domain in the interval 46–161 (LKGAFLTVHR…CDDNLLVVCE (116 aa)). 2 disulfides stabilise this stretch: C83–C160 and C138–C152. Residue N122 is glycosylated (N-linked (GlcNAc...) asparagine).

This sequence belongs to the alpha-type phospholipase A2 inhibitor family. As to quaternary structure, homotrimer; non-covalently linked. In terms of tissue distribution, expressed by the liver.

It is found in the secreted. Its function is as follows. This phospholipase A2 inhibitor binds directly phospholipase A2 in the presence or absence of calcium. The protein is Phospholipase A2 inhibitor clone 05 of Bothrops moojeni (Lance-headed viper).